The sequence spans 404 residues: Glucose-1-phosphate adenylyltransferase (404 aa).

Alpha-D-glucose 1-phosphate-binding positions include Tyr-99, Gly-164, 179–180, and Ser-197; that span reads EK.

It belongs to the bacterial/plant glucose-1-phosphate adenylyltransferase family.

The catalysed reaction is alpha-D-glucose 1-phosphate + ATP + H(+) = ADP-alpha-D-glucose + diphosphate. It functions in the pathway capsule biogenesis; capsule polysaccharide biosynthesis. Its pathway is glycan biosynthesis; glycogen biosynthesis. Involved in the biosynthesis of ADP-glucose, a building block, required in the biosynthesis of maltose-1-phosphate (M1P) and in the elongation reactions to produce linear alpha-1,4-glucans. Catalyzes the reaction between ATP and alpha-D-glucose 1-phosphate (G1P) to produce pyrophosphate and ADP-Glc. This chain is Glucose-1-phosphate adenylyltransferase, found in Mycobacterium marinum (strain ATCC BAA-535 / M).